Reading from the N-terminus, the 525-residue chain is Bifunctional purine biosynthesis protein PurH (525 aa).

The MGS-like domain maps to 1-145 (MSNVERALIS…KNNASVGIVT (145 aa)).

The protein belongs to the PurH family.

It carries out the reaction (6R)-10-formyltetrahydrofolate + 5-amino-1-(5-phospho-beta-D-ribosyl)imidazole-4-carboxamide = 5-formamido-1-(5-phospho-D-ribosyl)imidazole-4-carboxamide + (6S)-5,6,7,8-tetrahydrofolate. The enzyme catalyses IMP + H2O = 5-formamido-1-(5-phospho-D-ribosyl)imidazole-4-carboxamide. The protein operates within purine metabolism; IMP biosynthesis via de novo pathway; 5-formamido-1-(5-phospho-D-ribosyl)imidazole-4-carboxamide from 5-amino-1-(5-phospho-D-ribosyl)imidazole-4-carboxamide (10-formyl THF route): step 1/1. It functions in the pathway purine metabolism; IMP biosynthesis via de novo pathway; IMP from 5-formamido-1-(5-phospho-D-ribosyl)imidazole-4-carboxamide: step 1/1. The sequence is that of Bifunctional purine biosynthesis protein PurH from Alcanivorax borkumensis (strain ATCC 700651 / DSM 11573 / NCIMB 13689 / SK2).